The chain runs to 1888 residues: Nuclear pore membrane glycoprotein 210-like (1888 aa).

An N-terminal signal peptide occupies residues 1 to 35; it reads MTGCPASSRRRGFGLFFFLRLHRLLLLFLVLRGTL. Asn-84, Asn-304, Asn-348, Asn-495, Asn-522, Asn-812, and Asn-931 each carry an N-linked (GlcNAc...) asparagine glycan. Residues 1082 to 1154 form the BIG2 domain; sequence FPPFRLLPEK…TIQTVNEDTG (73 aa). Residue Asn-1445 is glycosylated (N-linked (GlcNAc...) asparagine). The chain crosses the membrane as a helical span at residues 1813 to 1833; sequence ILLLTLFAVLASTASIFLAYN. The N-linked (GlcNAc...) asparagine glycan is linked to Asn-1859.

The protein belongs to the NUP210 family.

Its subcellular location is the nucleus membrane. This is Nuclear pore membrane glycoprotein 210-like (NUP210L) from Homo sapiens (Human).